We begin with the raw amino-acid sequence, 91 residues long: Small ribosomal subunit protein uS19 (91 aa).

Belongs to the universal ribosomal protein uS19 family.

In terms of biological role, protein S19 forms a complex with S13 that binds strongly to the 16S ribosomal RNA. This Neorickettsia sennetsu (strain ATCC VR-367 / Miyayama) (Ehrlichia sennetsu) protein is Small ribosomal subunit protein uS19.